A 32-amino-acid polypeptide reads, in one-letter code: MSDIN-like toxin proprotein a (32 aa).

Positions 1–10 are excised as a propeptide; sequence MSDINATRLP. A cross-link (cyclopeptide (Ile-Pro)) is located at residues 11–18; that stretch reads IIGILLPP. Residues 19–32 constitute a propeptide that is removed on maturation; it reads CIGDDVTLLLTRGE.

This sequence belongs to the MSDIN fungal toxin family. Processed by the macrocyclase-peptidase enzyme POPB to yield a toxic cyclic octapeptide. POPB first removes 10 residues from the N-terminus. Conformational trapping of the remaining peptide forces the enzyme to release this intermediate rather than proceed to macrocyclization. The enzyme rebinds the remaining peptide in a different conformation and catalyzes macrocyclization of the N-terminal 8 residues.

Functionally, probable toxin that belongs to the MSDIN-like toxin family responsible for a large number of food poisoning cases and deaths. This Amanita phalloides (Death cap) protein is MSDIN-like toxin proprotein a.